The primary structure comprises 163 residues: Putative pre-16S rRNA nuclease (163 aa).

Belongs to the YqgF nuclease family.

It is found in the cytoplasm. Its function is as follows. Could be a nuclease involved in processing of the 5'-end of pre-16S rRNA. The protein is Putative pre-16S rRNA nuclease of Rhodopseudomonas palustris (strain BisA53).